We begin with the raw amino-acid sequence, 663 residues long: DNA ligase 1 (663 aa).

NAD(+) contacts are provided by residues 28-32 (DKEYD) and 76-77 (SL). Lysine 118 functions as the N6-AMP-lysine intermediate in the catalytic mechanism. Residues arginine 139, glutamate 173, and lysine 310 each contribute to the NAD(+) site. Residues cysteine 403, cysteine 406, cysteine 419, and cysteine 425 each contribute to the Zn(2+) site. The region spanning 583-663 (VSESVFNDKT…KFEELIESVK (81 aa)) is the BRCT domain.

It belongs to the NAD-dependent DNA ligase family. LigA subfamily. Mg(2+) is required as a cofactor. Requires Mn(2+) as cofactor.

It catalyses the reaction NAD(+) + (deoxyribonucleotide)n-3'-hydroxyl + 5'-phospho-(deoxyribonucleotide)m = (deoxyribonucleotide)n+m + AMP + beta-nicotinamide D-nucleotide.. In terms of biological role, DNA ligase that catalyzes the formation of phosphodiester linkages between 5'-phosphoryl and 3'-hydroxyl groups in double-stranded DNA using NAD as a coenzyme and as the energy source for the reaction. It is essential for DNA replication and repair of damaged DNA. The sequence is that of DNA ligase 1 from Clostridium acetobutylicum (strain ATCC 824 / DSM 792 / JCM 1419 / IAM 19013 / LMG 5710 / NBRC 13948 / NRRL B-527 / VKM B-1787 / 2291 / W).